We begin with the raw amino-acid sequence, 330 residues long: GRB2-related adapter protein 2 (330 aa).

Positions 1-56 constitute an SH3 1 domain; the sequence is MEAVAKFDFTASGEDELSFHTGDVLKILSNQEEWFKAELGSQEGYVPKNFIDIQFP. Tyrosine 45 is modified (phosphotyrosine). Residues 58–149 form the SH2 domain; it reads WFHEGLSRHQ…QKQIFLRDRT (92 aa). Lysine 106 bears the N6-acetyllysine mark. The interval 143–244 is disordered; the sequence is IFLRDRTRED…GSLDINDGHC (102 aa). Residues 144–164 are compositionally biased toward basic and acidic residues; it reads FLRDRTREDQGHRGNSLDRRS. Serine 187 carries the phosphoserine modification. The segment covering 209-222 has biased composition (low complexity); sequence PAPQQLQQPPQQRY. Serine 236 carries the phosphoserine modification. Threonine 262 is modified (phosphothreonine). The SH3 2 domain occupies 271–330; the sequence is GRVRWARALYDFEALEDDELGFHSGEVVEVLDSSNPSWWTGRLHNKLGLFPANYVAPMTR.

It belongs to the GRB2/sem-5/DRK family. Interacts with phosphorylated LIME1 upon TCR activation. Interacts with phosphorylated LAT and LAX1 upon TCR activation. Interacts with SHB. Interacts with PTPN23.

The protein localises to the nucleus. The protein resides in the cytoplasm. It localises to the endosome. Its function is as follows. Interacts with SLP-76 to regulate NF-AT activation. Binds to tyrosine-phosphorylated shc. In Homo sapiens (Human), this protein is GRB2-related adapter protein 2 (GRAP2).